The primary structure comprises 507 residues: Glutamate--tRNA ligase (507 aa).

The 'HIGH' region signature appears at 14–24 (PSPTGPLHIGG). Positions 262–266 (KLSKR) match the 'KMSKS' region motif. Residue Lys265 participates in ATP binding.

It belongs to the class-I aminoacyl-tRNA synthetase family. Glutamate--tRNA ligase type 1 subfamily. Monomer.

It localises to the cytoplasm. The enzyme catalyses tRNA(Glu) + L-glutamate + ATP = L-glutamyl-tRNA(Glu) + AMP + diphosphate. In terms of biological role, catalyzes the attachment of glutamate to tRNA(Glu) in a two-step reaction: glutamate is first activated by ATP to form Glu-AMP and then transferred to the acceptor end of tRNA(Glu). The sequence is that of Glutamate--tRNA ligase from Porphyromonas gingivalis (strain ATCC 33277 / DSM 20709 / CIP 103683 / JCM 12257 / NCTC 11834 / 2561).